Reading from the N-terminus, the 296-residue chain is MIKQYLQVTKPGIIFGNLISVVGGFLLASKGSIDYPLFLATLVGVSLVVASGCVFNNYIDRDIDKKMERTKNRVLVKGLIAPSVSLVYATALGIAGFALLYIGANPLAMWLAVMGFVVYVGVYSLYMKRHSVYGTLIGSLSGAAPPVIGYCAVTNEFDAGALILLAIFSLWQMPHSYAIAIFRFKDYQAANIPVLPVVKGISVAKNHITVYIVAFMIATLMLTLGGYAGYKYLIVAAAVSVWWLGMALRGYKTENDSVWARKLFVFSIVAITSLSVMMSIDFSATAAPEALMTYVW.

The next 9 membrane-spanning stretches (helical) occupy residues 8 to 28, 35 to 55, 84 to 104, 107 to 127, 132 to 152, 162 to 182, 208 to 228, 229 to 249, and 263 to 283; these read VTKP…FLLA, YPLF…GCVF, VSLV…YIGA, LAMW…SLYM, VYGT…GYCA, LILL…IAIF, ITVY…GGYA, GYKY…MALR, and LFVF…IDFS.

This sequence belongs to the UbiA prenyltransferase family. Protoheme IX farnesyltransferase subfamily.

It is found in the cell inner membrane. It catalyses the reaction heme b + (2E,6E)-farnesyl diphosphate + H2O = Fe(II)-heme o + diphosphate. It functions in the pathway porphyrin-containing compound metabolism; heme O biosynthesis; heme O from protoheme: step 1/1. In terms of biological role, converts heme B (protoheme IX) to heme O by substitution of the vinyl group on carbon 2 of heme B porphyrin ring with a hydroxyethyl farnesyl side group. This Serratia proteamaculans (strain 568) protein is Protoheme IX farnesyltransferase.